The sequence spans 109 residues: MEMDLNNRLTEDETLEQAYDIFLELAMDNLDPADVILFNLQFEERGGAELFDPSEDWSEHVDFDLNPDFFAEVVIGLAETDGGEINDIFARVLLCREKDHKLCHILWRE.

The protein belongs to the putative dsDNA mimic protein family.

In terms of biological role, may act as a double-stranded DNA (dsDNA) mimic. Probably regulates the activity of a dsDNA-binding protein. This is Putative double-stranded DNA mimic protein Ent638_2296 from Enterobacter sp. (strain 638).